We begin with the raw amino-acid sequence, 122 residues long: Large ribosomal subunit protein uL14 (122 aa).

Belongs to the universal ribosomal protein uL14 family. In terms of assembly, part of the 50S ribosomal subunit. Forms a cluster with proteins L3 and L19. In the 70S ribosome, L14 and L19 interact and together make contacts with the 16S rRNA in bridges B5 and B8.

In terms of biological role, binds to 23S rRNA. Forms part of two intersubunit bridges in the 70S ribosome. The chain is Large ribosomal subunit protein uL14 from Endomicrobium trichonymphae.